The following is a 285-amino-acid chain: Probable E3 ubiquitin-protein ligase IE1 (285 aa).

At 1–201 (MASKDSDVRC…LPGYWDRDDR (201 aa)) the chain is on the cytoplasmic side. Residues 124-183 (SIDEEGKQCWICRDGESLPEARYCNCYGDLQYCHEECLKTWISMSGEKKCKFCQTPYKVN) form an RING-CH-type zinc finger. 8 residues coordinate Zn(2+): Cys-132, Cys-135, Cys-147, Cys-149, His-157, Cys-160, Cys-173, and Cys-176. A helical membrane pass occupies residues 202–222 (FVFIAGFIGMGTILAGWIASF). Residues 223-238 (FYLLVVLCGKYFTYKD) are Extracellular-facing. A helical membrane pass occupies residues 239 to 259 (VMIVVGGLAIIQVVGLMFSLF). The Cytoplasmic segment spans residues 260–285 (MYFQIGNLLRQYINYMTETNIDPLRT).

It is found in the membrane. The enzyme catalyses S-ubiquitinyl-[E2 ubiquitin-conjugating enzyme]-L-cysteine + [acceptor protein]-L-lysine = [E2 ubiquitin-conjugating enzyme]-L-cysteine + N(6)-ubiquitinyl-[acceptor protein]-L-lysine.. It participates in protein modification; protein ubiquitination. In terms of biological role, controls the expression of later classes of genes and also of the IE genes (Potential). E3 ubiquitin-protein ligase. E3 ubiquitin ligases accept ubiquitin from an E2 ubiquitin-conjugating enzyme in the form of a thioester and then directly transfer the ubiquitin to targeted substrates. The sequence is that of Probable E3 ubiquitin-protein ligase IE1 (IE1) from Bovine herpesvirus 4 (strain DN-599) (BoHV-4).